Here is a 334-residue protein sequence, read N- to C-terminus: Glyceraldehyde-3-phosphate dehydrogenase B (334 aa).

Residues 12-13 (RI), D34, and S121 each bind NAD(+). Residues 149 to 151 (SCT), T180, 209 to 210 (TG), and R232 each bind D-glyceraldehyde 3-phosphate. C150 functions as the Nucleophile in the catalytic mechanism. N314 contacts NAD(+).

Belongs to the glyceraldehyde-3-phosphate dehydrogenase family. As to quaternary structure, homotetramer.

The enzyme catalyses D-glyceraldehyde 3-phosphate + phosphate + NAD(+) = (2R)-3-phospho-glyceroyl phosphate + NADH + H(+). The protein operates within carbohydrate degradation; glycolysis; pyruvate from D-glyceraldehyde 3-phosphate: step 1/5. Glyceraldehyde-3-phosphate dehydrogenase; part of the gene cluster that mediates the biosynthesis of heptelidic acid (HA), a sesquiterpene lactone that acts as an inhibitor of glyceraldehyde-3-phosphatedehydrogenase (GAPDH) and a growth inhibitor of the salt-tolerant lactic acid bacteria in soy sauce brewing. The GAPDPH hepG/gdpB shows much higher resistance to HA than the GAPDH gpdA located outside of the cluster, but it does not seem to act in self-resistance. The chain is Glyceraldehyde-3-phosphate dehydrogenase B from Aspergillus oryzae (strain ATCC 42149 / RIB 40) (Yellow koji mold).